The chain runs to 486 residues: Malonate-semialdehyde dehydrogenase 1 (486 aa).

NAD(+)-binding residues include Phe154, Lys178, Glu181, Arg182, and Ser231. Cys286 acts as the Nucleophile in catalysis. Glu386 provides a ligand contact to NAD(+).

It belongs to the aldehyde dehydrogenase family. IolA subfamily. As to quaternary structure, homotetramer.

It catalyses the reaction 3-oxopropanoate + NAD(+) + CoA + H2O = hydrogencarbonate + acetyl-CoA + NADH + H(+). The enzyme catalyses 2-methyl-3-oxopropanoate + NAD(+) + CoA + H2O = propanoyl-CoA + hydrogencarbonate + NADH + H(+). The protein operates within polyol metabolism; myo-inositol degradation into acetyl-CoA; acetyl-CoA from myo-inositol: step 7/7. In terms of biological role, catalyzes the oxidation of malonate semialdehyde (MSA) and methylmalonate semialdehyde (MMSA) into acetyl-CoA and propanoyl-CoA, respectively. Is involved in a myo-inositol catabolic pathway. Bicarbonate, and not CO2, is the end-product of the enzymatic reaction. In Bacillus thuringiensis (strain Al Hakam), this protein is Malonate-semialdehyde dehydrogenase 1.